The sequence spans 431 residues: Phosphoribosylamine--glycine ligase (431 aa).

The ATP-grasp domain maps to 109–316 (KDFLARHGIP…LVDLLEAAID (208 aa)). An ATP-binding site is contributed by 135-196 (VREKGTPIVV…EEFLDGEEAS (62 aa)). 2 residues coordinate Mg(2+): E286 and N288.

It belongs to the GARS family. Requires Mg(2+) as cofactor. The cofactor is Mn(2+).

The catalysed reaction is 5-phospho-beta-D-ribosylamine + glycine + ATP = N(1)-(5-phospho-beta-D-ribosyl)glycinamide + ADP + phosphate + H(+). It functions in the pathway purine metabolism; IMP biosynthesis via de novo pathway; N(1)-(5-phospho-D-ribosyl)glycinamide from 5-phospho-alpha-D-ribose 1-diphosphate: step 2/2. In Xanthomonas axonopodis pv. citri (strain 306), this protein is Phosphoribosylamine--glycine ligase.